The primary structure comprises 143 residues: Transcriptional regulator MraZ (143 aa).

2 consecutive SpoVT-AbrB domains span residues 5–47 (EFEH…PMTE) and 76–119 (ATEC…SAER).

It belongs to the MraZ family. As to quaternary structure, forms oligomers.

The protein resides in the cytoplasm. Its subcellular location is the nucleoid. The chain is Transcriptional regulator MraZ from Levilactobacillus brevis (strain ATCC 367 / BCRC 12310 / CIP 105137 / JCM 1170 / LMG 11437 / NCIMB 947 / NCTC 947) (Lactobacillus brevis).